A 367-amino-acid chain; its full sequence is Peptide chain release factor 2 (367 aa).

Gln-249 bears the N5-methylglutamine mark.

The protein belongs to the prokaryotic/mitochondrial release factor family. Methylated by PrmC. Methylation increases the termination efficiency of RF2.

It localises to the cytoplasm. Functionally, peptide chain release factor 2 directs the termination of translation in response to the peptide chain termination codons UGA and UAA. The sequence is that of Peptide chain release factor 2 from Thermotoga petrophila (strain ATCC BAA-488 / DSM 13995 / JCM 10881 / RKU-1).